The primary structure comprises 1320 residues: Myopalladin (1320 aa).

The interaction with CARP stretch occupies residues 1–522; it reads MQDDSIEAST…FTCTASNKYG (522 aa). 3 disordered regions span residues 19–68, 84–145, and 165–271; these read SYLA…AFLS, NYDP…SETQ, and FKSH…PPRF. Basic and acidic residues-rich tracts occupy residues 23-35 and 87-106; these read ETRH…RSRA and PLEK…DQMK. Ser-101 is subject to Phosphoserine. Polar residues predominate over residues 107–130; sequence HSPNLSFEPNFCQDNPRSPTSSKE. Residue Ser-131 is modified to Phosphoserine. Residues 168–182 are compositionally biased toward basic residues; the sequence is HSSKRIRPRACKNHK. Residues 186–201 are compositionally biased toward polar residues; that stretch reads ESQNKVMQENSSSFSD. The span at 218–239 shows a compositional bias: basic and acidic residues; it reads DTRDNEVNHALEQQEAKRREAE. Residues 219–248 are a coiled coil; that stretch reads TRDNEVNHALEQQEAKRREAEQAASEAAGG. The span at 240–258 shows a compositional bias: low complexity; that stretch reads QAASEAAGGDTTPGSSPSS. Position 251 is a phosphothreonine (Thr-251). 2 consecutive Ig-like domains span residues 269–359 and 435–531; these read PRFT…IYIE and PVFT…AQLH. 2 disulfides stabilise this stretch: Cys-290–Cys-341 and Cys-456–Cys-515. Residues 554-655 are disordered; it reads AAIEPQPSPP…VKEPPPVLAK (102 aa). Residues 559 to 575 show a composition bias toward pro residues; sequence QPSPPHSEPPSVEQPPK. Phosphoserine is present on Ser-644. Residues 649-677 are interaction with NEB; the sequence is PPPVLAKPKLDSTQLQQLHNQVLLEQHQL. Ser-759 bears the Phosphoserine mark. Residues 763–805 are disordered; it reads LLVSHPSVQTKSPGGLSIQNEPLPPGPTEPTPPPFTFSIPSGN. A compositionally biased stretch (polar residues) spans 768–782; sequence PSVQTKSPGGLSIQN. The span at 784-797 shows a compositional bias: pro residues; sequence PLPPGPTEPTPPPF. A phosphoserine mark is found at Ser-813, Ser-818, Ser-867, Ser-907, and Ser-928. The segment at 844 to 876 is disordered; it reads NAMGLPRSAPSMPSQGLAKKNTKSPQPVNDDNI. Ig-like domains follow at residues 945–1029, 1073–1162, and 1172–1262; these read PIFD…GRIS, PHFL…LELS, and PVIL…ARLD. The interaction with ACTN stretch occupies residues 945–1320; the sequence is PIFDKRLKHF…SRSVVESDEL (376 aa). An intrachain disulfide couples Cys-1094 to Cys-1146.

It belongs to the myotilin/palladin family. In terms of assembly, interacts with TTN/titin, NEB, NEBL, ACTN2 and CARP. Expressed in adult skeletal muscle and fetal heart.

The protein localises to the cytoplasm. It is found in the nucleus. It localises to the myofibril. Its subcellular location is the sarcomere. The protein resides in the z line. Functionally, component of the sarcomere that tethers together nebulin (skeletal muscle) and nebulette (cardiac muscle) to alpha-actinin, at the Z lines. This Homo sapiens (Human) protein is Myopalladin (MYPN).